A 189-amino-acid polypeptide reads, in one-letter code: FUN14 domain-containing protein 2 (189 aa).

Residues 1–80 (METSAPRAGS…GQESGPSAEK (80 aa)) lie on the Cytoplasmic side of the membrane. S10 and S53 each carry phosphoserine. A helical transmembrane segment spans residues 81–101 (YSVATQLFIGGVTGWCTGFIF). Residues 102-107 (QNVGKL) lie on the Mitochondrial intermembrane side of the membrane. The chain crosses the membrane as a helical span at residues 108–128 (AATAVGGGFFLLQLANHTGYI). Residues 129-164 (KVDWQRVEKDMKKAKEQLKIRKSNQMPTEVRSKAEE) lie on the Cytoplasmic side of the membrane. Phosphoserine is present on S151. Residues 165-185 (VVSFVKKNVLVTGGFFGGFLL) traverse the membrane as a helical segment. The Mitochondrial intermembrane portion of the chain corresponds to 186-189 (GMAS).

Belongs to the FUN14 family.

It localises to the mitochondrion outer membrane. Its subcellular location is the nucleus. In terms of biological role, binds directly and specifically 1,2-Diacyl-sn-glycero-3-phospho-(1'-myo-inositol-3',4',5'-bisphosphate) (PIP3) leading to the recruitment of PIP3 to mitochondria and may play a role in the regulation of the platelet activation via AKT/GSK3B/cGMP signaling pathways. May act as transcription factor that regulates SREBP1 (isoform SREBP-1C) expression in order to modulate triglyceride (TG) homeostasis in hepatocytes. The protein is FUN14 domain-containing protein 2 of Macaca mulatta (Rhesus macaque).